A 391-amino-acid chain; its full sequence is Chalcone synthase (391 aa).

Residue cysteine 164 is part of the active site.

The protein belongs to the thiolase-like superfamily. Chalcone/stilbene synthases family.

It catalyses the reaction (E)-4-coumaroyl-CoA + 3 malonyl-CoA + 3 H(+) = 2',4,4',6'-tetrahydroxychalcone + 3 CO2 + 4 CoA. Its pathway is secondary metabolite biosynthesis; flavonoid biosynthesis. In terms of biological role, the primary product of this enzyme is 4,2',4',6'-tetrahydroxychalcone (also termed naringenin-chalcone or chalcone) which can under specific conditions spontaneously isomerize into naringenin. The chain is Chalcone synthase (CHS) from Dianthus monspessulanus.